A 1608-amino-acid chain; its full sequence is MSARRQELQDRAIVKIAAHLPDLIVYGDFSPERPSVKCFDGVLMFVDISGFTAMTEKFSTAMYMDRGAEQLVEILNYYISAIVEKVLIFGGDILKFAGDALLALWKVERKQLKNIITVVIKCSLEIHGLFEAKEVEEGLDIRVKIGLAAGHITMLVFGDETRNYFLVIGQAVDDVRLAQNMAQMNDVILSPNCWQLCDRSMIEIERIPDQRAVKVSFLKPPPTFNFDEFFAKCMAFMDYYPSGDHKNFLRLACMLESDPELELSLQKYVMEIILKQIDDKQLRGYLSELRPVTIVFVNLMFKEQDKAEVIGSAIQAACVHITSVLKVFRGQINKVFMFDKGCSFLCVFGFPGEKAPDEITHALESAVDIFDFCSQVHKIRTVSIGVASGIVFCGIVGHTVRHEYTVIGQKVNIAARMMMYYPGIVTCDSVTYDGSNLPAYFFKELPKKVMKGVADPGPVYQCLGLNEKVMFGMAYLICNRYEGYPLLGRVREIDYFMSTMKDFLMTNCSRVLMYEGLPGYGKSQVLMEIEYLASQHENHRAVAIALTKISFHQNFYTIQILMANVLGLDTCKHYKERQTNLQNRVKTLLDDKYHCLLNDIFHVQFPVSREMSRMSKIRKQKQLEALFMKILEQTVREERIIFIIDEAQFVDVASWAFIEKLIRSMPIFIVMSLCPFPETPCAAANAIMKNRNTTYITLGTMQPQEIRDKVCVDLSVSSIPRELDSYLVEGSCGIPYYCEELLKNLDHHRILIFQQAEAEEKTNVTWNNLFKYSVKPTEDMYLYTSIAAGQKEACYLTSGVRLKNLSPPASLKEISLVQLDSMSLSHQMLVRCAAIIGLTFTTELLFEILPCWNMKMMIKALATLVESNVFDCFRSSKDLQLALKQNVTTFEVHYRSLSLKSKEGLAYSEEEQLREMEGEVIECRILRFCRPIMQKTAYELWLKDQKKVLHLKCARFLEESAHRCNHCRNRDFIPYHHFIADIRLNTLDMDTVKKMVKSHGFKTEDEVIFSKSEIPRKFKFPENISITETREKILHFFDNVIIKMRTSQDDVIPLESCHCEELLQIVILPLAQHFVALEENNKALYYFLELASAYLILGDNYNAYMYLGEGERLLKSLTNEDSWSQTFEYATFYSLKGEICFNMGQMVLAKKMLRKALKLLNRMFPCNLLSLTFQMHIEKNRLSHFMNQHTQEGSLPGKKLAQLFLQSSCFSLLWKIYSLNFFFHYKYYGRLAAIMQMNTSLETQNNFQIIKAFLDFSLYRHLAGYEGVWFKYEILVMEQLLNLPLKGEAFEIMAYAADALGHIKFLTGHLDLAIELGSRAHKMWSLLRNPNKYHMVLCRLSKPLFLKSRYKHLVQVLGWLWDLSVTEEHIFSKAFFYFVCLDIMLYSGFIYRTFEECLEFIHHNEDNRILKFQSGLLLGLYSCIAVWYARLQEWDNFYKFSNRAKTLVTRRTPTVLYYEGISRYMEGQVLHLQKQIEEQAENAQDSGVELLKALETLVAQNTTGPVFYPRLYHLMAYVCILMGDGHSCDFFLNTALELSETQGNLLEKCWLSMSKEWWYSAPELTGDQWLQTVLSLPSWDKIVSGNVTLQDVQKNKFLMRVNILDNPF.

2 consecutive Guanylate cyclase domains span residues 42–179 (VLMF…RLAQ) and 293–418 (TIVF…ARMM). Mg(2+) contacts are provided by Asp47 and Ile48. 47–52 (DISGFT) contacts ATP. A hydrogencarbonate-binding site is contributed by Lys95. Asp99 lines the Mg(2+) pocket. Residues Asp99 and Lys144 each contribute to the ATP site. Hydrogencarbonate contacts are provided by Val167, Arg176, and Met337. Residues Val406 and 412–416 (NIAAR) each bind ATP.

The protein belongs to the adenylyl cyclase class-4/guanylyl cyclase family. Mg(2+) serves as cofactor. The cofactor is Mn(2+). Cleavage may occur to generate the active 48 kDa form. In terms of tissue distribution, detected in testis (at protein level). Preferentially expressed in testis.

It localises to the cell membrane. The protein resides in the cytoplasm. The protein localises to the cytoskeleton. It is found in the perinuclear region. Its subcellular location is the nucleus. It localises to the cell projection. The protein resides in the cilium. The protein localises to the mitochondrion. It catalyses the reaction ATP = 3',5'-cyclic AMP + diphosphate. With respect to regulation, activated by manganese or magnesium ions. In the presence of magnesium ions, the enzyme is activated by bicarbonate. Calcium mildly increases the enzyme activity, also in the presence of magnesium ions. Functionally, catalyzes the formation of the signaling molecule cAMP. May function as sensor that mediates responses to changes in cellular bicarbonate and CO(2) levels. Has a critical role in mammalian spermatogenesis by producing the cAMP which regulates cAMP-responsive nuclear factors indispensable for sperm maturation in the epididymis. Induces capacitation, the maturational process that sperm undergo prior to fertilization. Involved in ciliary beat regulation. The chain is Adenylate cyclase type 10 (Adcy10) from Rattus norvegicus (Rat).